The primary structure comprises 165 residues: E3 ubiquitin-protein ligase RNF181 (165 aa).

The RING-type; atypical zinc finger occupies 88–129; that stretch reads CPVCLLEFEEEETVIEMPCHHLFHSNCILPWLSKTNSCPLCR. The disordered stretch occupies residues 136–165; the sequence is DDSYEEHKKDKARRQQQQHRLENLHGAMYT. Threonine 165 carries the phosphothreonine modification.

This sequence belongs to the RNF181 family. In terms of assembly, directly interacts with ITGA2B and, as a result, with integrin ITGA2B/ITGB3. There is no evidence that integrin ITGA2B/ITGB3 is an endogenous substrate for RNF181-directed ubiquitination. Auto-ubiquitinated as part of the enzymatic reaction.

It catalyses the reaction S-ubiquitinyl-[E2 ubiquitin-conjugating enzyme]-L-cysteine + [acceptor protein]-L-lysine = [E2 ubiquitin-conjugating enzyme]-L-cysteine + N(6)-ubiquitinyl-[acceptor protein]-L-lysine.. Its pathway is protein modification; protein ubiquitination. E3 ubiquitin-protein ligase which accepts ubiquitin from an E2 ubiquitin-conjugating enzyme in the form of a thioester and then directly transfers the ubiquitin to targeted substrates. Catalyzes monoubiquitination of 26S proteasome subunit PSMC2/RPT1. The protein is E3 ubiquitin-protein ligase RNF181 (Rnf181) of Rattus norvegicus (Rat).